Here is a 517-residue protein sequence, read N- to C-terminus: Crotonobetaine/carnitine--CoA ligase (517 aa).

This sequence belongs to the ATP-dependent AMP-binding enzyme family.

It carries out the reaction 4-(trimethylamino)butanoate + ATP + CoA = 4-(trimethylamino)butanoyl-CoA + AMP + diphosphate. The enzyme catalyses crotonobetaine + ATP + CoA = crotonobetainyl-CoA + AMP + diphosphate. It catalyses the reaction (R)-carnitine + ATP + CoA = (R)-carnitinyl-CoA + AMP + diphosphate. It participates in amine and polyamine metabolism; carnitine metabolism. Catalyzes the transfer of CoA to carnitine, generating the initial carnitinyl-CoA needed for the CaiB reaction cycle. Also has activity toward crotonobetaine and gamma-butyrobetaine. This Shigella sonnei (strain Ss046) protein is Crotonobetaine/carnitine--CoA ligase.